The chain runs to 371 residues: Probable palmitoyltransferase ZDHHC11B (371 aa).

A run of 2 helical transmembrane segments spans residues valine 43–leucine 63 and tyrosine 70–alanine 90. Residues glutamine 125 to alanine 175 enclose the DHHC domain. The S-palmitoyl cysteine intermediate role is filled by cysteine 155. A run of 3 helical transmembrane segments spans residues alanine 177–valine 197, threonine 216–isoleucine 236, and leucine 239–isoleucine 259. The tract at residues aspartate 335–aspartate 371 is disordered. Over residues proline 347–threonine 359 the composition is skewed to polar residues. The span at glutamate 360–aspartate 371 shows a compositional bias: basic and acidic residues.

Belongs to the DHHC palmitoyltransferase family.

Its subcellular location is the membrane. The catalysed reaction is L-cysteinyl-[protein] + hexadecanoyl-CoA = S-hexadecanoyl-L-cysteinyl-[protein] + CoA. In terms of biological role, probable palmitoyltransferase that could catalyze the addition of palmitate onto various protein substrates and be involved in a variety of cellular processes. May play a role in cell proliferation. This Homo sapiens (Human) protein is Probable palmitoyltransferase ZDHHC11B.